A 1036-amino-acid polypeptide reads, in one-letter code: Isoleucine--tRNA ligase (1036 aa).

The 'HIGH' region signature appears at 46-56; the sequence is PFATGLPHYGH. The short motif at 589-593 is the 'KMSKS' region element; the sequence is KMSKR. Position 592 (K592) interacts with ATP.

Belongs to the class-I aminoacyl-tRNA synthetase family. IleS type 2 subfamily. As to quaternary structure, monomer. The cofactor is Zn(2+).

The protein localises to the cytoplasm. It catalyses the reaction tRNA(Ile) + L-isoleucine + ATP = L-isoleucyl-tRNA(Ile) + AMP + diphosphate. Functionally, catalyzes the attachment of isoleucine to tRNA(Ile). As IleRS can inadvertently accommodate and process structurally similar amino acids such as valine, to avoid such errors it has two additional distinct tRNA(Ile)-dependent editing activities. One activity is designated as 'pretransfer' editing and involves the hydrolysis of activated Val-AMP. The other activity is designated 'posttransfer' editing and involves deacylation of mischarged Val-tRNA(Ile). This is Isoleucine--tRNA ligase from Chlamydia trachomatis serovar L2 (strain ATCC VR-902B / DSM 19102 / 434/Bu).